Reading from the N-terminus, the 84-residue chain is Toxin Tb1 (84 aa).

The signal sequence occupies residues 1 to 20 (MKGMILFISCLLLIGIVVEC). One can recognise an LCN-type CS-alpha/beta domain in the interval 21-82 (KEGYLMDHEG…VWDRATNKCG (62 aa)). Cystine bridges form between cysteine 31–cysteine 81, cysteine 35–cysteine 57, cysteine 43–cysteine 62, and cysteine 47–cysteine 64. Cysteine 81 bears the Cysteine amide mark.

The protein belongs to the long (4 C-C) scorpion toxin superfamily. Sodium channel inhibitor family. Beta subfamily. In terms of tissue distribution, expressed by the venom gland.

The protein resides in the secreted. Its function is as follows. Beta toxins bind voltage-independently at site-4 of sodium channels (Nav) and shift the voltage of activation toward more negative potentials thereby affecting sodium channel activation and promoting spontaneous and repetitive firing. Is lethal to mice. The sequence is that of Toxin Tb1 from Tityus bahiensis (Brazilian scorpion).